The chain runs to 450 residues: Benzene 1,2-dioxygenase subunit alpha (450 aa).

The Rieske domain maps to 54 to 163 (WLLLGHETQI…VETYKGLIFA (110 aa)). C96, H98, C116, and H119 together coordinate [2Fe-2S] cluster. Positions 222 and 228 each coordinate Fe cation.

This sequence belongs to the bacterial ring-hydroxylating dioxygenase alpha subunit family. This dioxygenase system consists of four proteins: the two subunits of the hydroxylase component (BnzA and BnzB), a ferredoxin (BnzC) and a ferredoxin reductase (BnzD). It depends on [2Fe-2S] cluster as a cofactor. The cofactor is Fe cation.

The catalysed reaction is benzene + NADH + O2 + H(+) = cis-1,2-dihydrobenzene-1,2-diol + NAD(+). The enzyme catalyses toluene + NADH + O2 + H(+) = (1S,2R)-3-methylcyclohexa-3,5-diene-1,2-diol + NAD(+). It participates in aromatic compound metabolism; benzene degradation; catechol from benzene: step 1/2. The protein operates within xenobiotic degradation; toluene degradation. It functions in the pathway xenobiotic degradation; xylene degradation. Its function is as follows. Catalyzes both the oxidation of benzene and toluene. This Pseudomonas putida (strain ATCC 700007 / DSM 6899 / JCM 31910 / BCRC 17059 / LMG 24140 / F1) protein is Benzene 1,2-dioxygenase subunit alpha (bnzA).